A 275-amino-acid chain; its full sequence is ATP synthase subunit a (275 aa).

Transmembrane regions (helical) follow at residues 46 to 66 (RLML…VIAM), 104 to 124 (FLPV…ASII), 135 to 155 (IGMP…VGIK), 166 to 186 (SIVV…IEFI), 204 to 224 (MLAG…FFFV), 231 to 251 (IFGV…LLVI), and 252 to 272 (FLQA…ALHA).

Belongs to the ATPase A chain family. In terms of assembly, F-type ATPases have 2 components, CF(1) - the catalytic core - and CF(0) - the membrane proton channel. CF(1) has five subunits: alpha(3), beta(3), gamma(1), delta(1), epsilon(1). CF(0) has three main subunits: a(1), b(2) and c(9-12). The alpha and beta chains form an alternating ring which encloses part of the gamma chain. CF(1) is attached to CF(0) by a central stalk formed by the gamma and epsilon chains, while a peripheral stalk is formed by the delta and b chains.

Its subcellular location is the cell membrane. Key component of the proton channel; it plays a direct role in the translocation of protons across the membrane. This Rhodococcus erythropolis (strain PR4 / NBRC 100887) protein is ATP synthase subunit a.